A 201-amino-acid polypeptide reads, in one-letter code: UPF0301 protein CE2927 (201 aa).

This sequence belongs to the UPF0301 (AlgH) family.

This Corynebacterium efficiens (strain DSM 44549 / YS-314 / AJ 12310 / JCM 11189 / NBRC 100395) protein is UPF0301 protein CE2927.